A 163-amino-acid chain; its full sequence is Phosphopantetheine adenylyltransferase (163 aa).

Serine 11 serves as a coordination point for substrate. Residues serine 11–phenylalanine 12 and histidine 19 contribute to the ATP site. The substrate site is built by lysine 43, leucine 75, and arginine 89. ATP contacts are provided by residues glycine 90–arginine 92, glutamate 100, and phenylalanine 125–serine 131.

Belongs to the bacterial CoaD family. Homohexamer. Requires Mg(2+) as cofactor.

The protein localises to the cytoplasm. It catalyses the reaction (R)-4'-phosphopantetheine + ATP + H(+) = 3'-dephospho-CoA + diphosphate. The protein operates within cofactor biosynthesis; coenzyme A biosynthesis; CoA from (R)-pantothenate: step 4/5. Its function is as follows. Reversibly transfers an adenylyl group from ATP to 4'-phosphopantetheine, yielding dephospho-CoA (dPCoA) and pyrophosphate. This chain is Phosphopantetheine adenylyltransferase, found in Geobacter metallireducens (strain ATCC 53774 / DSM 7210 / GS-15).